The following is a 236-amino-acid chain: SERTA domain-containing protein 1 (236 aa).

Positions 1 to 20 (MLSKGLKRKREEEEEKEPLA) are disordered. The SERTA domain maps to 38-85 (PAVASSSLFDLSVLKLHHSLQQSEPDLRHLVLVVNTLRRIQASMAPAA). The segment at 189-211 (PASEGLKPGPEDGPGKEEAPELD) is disordered. The span at 197-207 (GPEDGPGKEEA) shows a compositional bias: basic and acidic residues.

Interacts with the PHD-bromodomain of TIF1, TRIM28/TIF1B and p300/CBP. Interacts with E2F1 and TFDP1; modulates transactivation activity of TFDP1/E2F complexes. Also interacts with CDK4. In terms of processing, polyubiquitinated, which promotes proteasomal degradation.

In terms of biological role, acts at E2F-responsive promoters as coregulator to integrate signals provided by PHD- and/or bromodomain-containing transcription factors. Stimulates E2F1/TFDP1 transcriptional activity. Renders the activity of cyclin D1/CDK4 resistant to the inhibitory effects of CDKN2A/p16INK4A. This Homo sapiens (Human) protein is SERTA domain-containing protein 1 (SERTAD1).